Here is a 174-residue protein sequence, read N- to C-terminus: U-stichotoxin-Hau2a (174 aa).

The N-terminal stretch at 1–18 (MKPIFIVALLFSTCLVNA) is a signal peptide. The propeptide occupies 19–33 (KPSINDADIKREPEP). Proline 39 bears the Hydroxyproline mark. Disulfide bonds link cysteine 40–cysteine 51 and cysteine 43–cysteine 58. The propeptide occupies 61–67 (RKREPEP). At proline 73 the chain carries Hydroxyproline. 2 cysteine pairs are disulfide-bonded: cysteine 74–cysteine 85 and cysteine 77–cysteine 92. The propeptide occupies 95-101 (RKREPEP). The residue at position 107 (proline 107) is a Hydroxyproline. Disulfide bonds link cysteine 108/cysteine 119 and cysteine 111/cysteine 126. Residues 129 to 135 (RKREPEP) constitute a propeptide that is removed on maturation. Proline 141 is subject to Hydroxyproline. Cystine bridges form between cysteine 142–cysteine 153 and cysteine 145–cysteine 160. Positions 163–174 (RKREPENQDLWS) are excised as a propeptide.

The protein belongs to the sea anemone BBH family.

Its subcellular location is the secreted. It is found in the nematocyst. Its function is as follows. Neurotoxin that paralyzes freshwater crabs at high concentration. The protein is U-stichotoxin-Hau2a of Heteractis aurora (Banded sea anemone).